The sequence spans 910 residues: ZZ-type zinc finger-containing protein 3 (910 aa).

Disordered regions lie at residues 41-117 (AHPE…RQAE) and 133-153 (EATN…PGEH). Residues 67 to 84 (QKGTNNGRTSDVRQQSAR) show a composition bias toward polar residues. Phosphoserine is present on residues S89, S96, S137, S138, and S142. Positions 96–116 (SSSEKDDLERQALESCERRQA) are enriched in basic and acidic residues. Residues 142 to 153 (SPVKPDKEPGEH) are compositionally biased toward basic and acidic residues. Residue K283 forms a Glycyl lysine isopeptide (Lys-Gly) (interchain with G-Cter in SUMO2) linkage. 3 disordered regions span residues 303 to 358 (TAES…VSGE), 373 to 444 (TSLS…PQDG), and 609 to 641 (ARPK…SHNR). Composition is skewed to polar residues over residues 331 to 347 (SSAS…NPLD) and 397 to 434 (SSPT…SESP). At K401 the chain carries N6-acetyllysine. Residue S613 is modified to Phosphoserine. The span at 613 to 622 (SPLDPKKDGE) shows a compositional bias: basic and acidic residues. K654 participates in a covalent cross-link: Glycyl lysine isopeptide (Lys-Gly) (interchain with G-Cter in SUMO2). In terms of domain architecture, HTH myb-type spans 654–714 (KPETFNQLWT…RVQKYFIKLT (61 aa)). Positions 687–710 (WQKIADELGNRTAKQVASRVQKYF) form a DNA-binding region, H-T-H motif. N6-acetyllysine is present on K708. A Glycyl lysine isopeptide (Lys-Gly) (interchain with G-Cter in SUMO2) cross-link involves residue K715. The ZZ-type zinc finger occupies 825–884 (HVGFKCDNCGVEPIQGVRWHCQDCPPEMSLDFCDSCSDCPHETDIHKEDHQLEPVYKSET). Positions 830, 833, 845, 848, 857, 860, 870, and 874 each coordinate Zn(2+).

Component of the ADA2A-containing complex (ATAC), composed of KAT14, KAT2A, TADA2L, TADA3L, ZZ3, MBIP, WDR5, YEATS2, CCDC101 and DR1. Interacts via (ZZ-type zinc finger) with histone H3 in a methylation-independent manner and acetylation on 'Lys-4' (H3K4ac) moderately enhances the interaction.

The protein resides in the nucleus. Histone H3 reader that is required for the ATAC complex-mediated maintenance of histone acetylation and gene activation. Component of the ATAC complex, a complex with histone acetyltransferase activity on histones H3 and H4. The sequence is that of ZZ-type zinc finger-containing protein 3 (Zzz3) from Mus musculus (Mouse).